A 358-amino-acid chain; its full sequence is CRS2-associated factor 2, mitochondrial (358 aa).

The N-terminal 28 residues, 1 to 28, are a transit peptide targeting the mitochondrion; the sequence is MLSIRRSLTLAKEPKDLFLFLCNLRARC. The tract at residues 35–64 is disordered; the sequence is DPPFSPLSKPTKPPKEKKKQKTKKQDQSSE. 2 CRM domains span residues 141 to 239 and 261 to 357; these read ETLT…SRPI and DGLE…ELVT.

Part of large ribonucleo-protein complexes that include group IIB introns.

It localises to the mitochondrion. In terms of biological role, may be involved in the splicing of group IIB introns in mitochondria. The sequence is that of CRS2-associated factor 2, mitochondrial from Arabidopsis thaliana (Mouse-ear cress).